A 37-amino-acid polypeptide reads, in one-letter code: Large ribosomal subunit protein bL36 (37 aa).

It belongs to the bacterial ribosomal protein bL36 family.

This is Large ribosomal subunit protein bL36 from Acidovorax ebreus (strain TPSY) (Diaphorobacter sp. (strain TPSY)).